The following is a 325-amino-acid chain: DNA repair and recombination protein RadA (325 aa).

ATP is bound at residue 107 to 114 (GEFGSGKT).

Belongs to the eukaryotic RecA-like protein family.

Its function is as follows. Involved in DNA repair and in homologous recombination. Binds and assemble on single-stranded DNA to form a nucleoprotein filament. Hydrolyzes ATP in a ssDNA-dependent manner and promotes DNA strand exchange between homologous DNA molecules. The chain is DNA repair and recombination protein RadA from Methanosarcina barkeri (strain Fusaro / DSM 804).